The primary structure comprises 217 residues: Adenylate kinase (217 aa).

10–15 (GGGKGT) lines the ATP pocket. An NMP region spans residues 30–59 (STGDMLRAAVASGSEVGKKAKAVMDAGQLV). AMP contacts are provided by residues Thr-31, Arg-36, 57-59 (QLV), 85-88 (GFPR), and Gln-92. The LID stretch occupies residues 126–164 (GRYTCAKCGAGYHDKFQLPQVAGKCDSCGGTEFARRPDD). An ATP-binding site is contributed by Arg-127. Zn(2+) contacts are provided by Cys-130, Cys-133, Cys-150, and Cys-153. The AMP site is built by Arg-161 and Arg-172. Met-200 contacts ATP.

It belongs to the adenylate kinase family. Monomer.

The protein resides in the cytoplasm. It carries out the reaction AMP + ATP = 2 ADP. It participates in purine metabolism; AMP biosynthesis via salvage pathway; AMP from ADP: step 1/1. Functionally, catalyzes the reversible transfer of the terminal phosphate group between ATP and AMP. Plays an important role in cellular energy homeostasis and in adenine nucleotide metabolism. The protein is Adenylate kinase of Paramagnetospirillum magneticum (strain ATCC 700264 / AMB-1) (Magnetospirillum magneticum).